The chain runs to 81 residues: Small ribosomal subunit protein bS18 (81 aa).

Belongs to the bacterial ribosomal protein bS18 family. In terms of assembly, part of the 30S ribosomal subunit. Forms a tight heterodimer with protein bS6.

Its function is as follows. Binds as a heterodimer with protein bS6 to the central domain of the 16S rRNA, where it helps stabilize the platform of the 30S subunit. This is Small ribosomal subunit protein bS18 from Syntrophobacter fumaroxidans (strain DSM 10017 / MPOB).